A 367-amino-acid polypeptide reads, in one-letter code: DNA replication and repair protein RecF (367 aa).

Residue 30–37 (GANGSGKT) coordinates ATP.

It belongs to the RecF family.

The protein localises to the cytoplasm. Its function is as follows. The RecF protein is involved in DNA metabolism; it is required for DNA replication and normal SOS inducibility. RecF binds preferentially to single-stranded, linear DNA. It also seems to bind ATP. This is DNA replication and repair protein RecF from Pseudomonas syringae pv. tomato (strain ATCC BAA-871 / DC3000).